A 181-amino-acid chain; its full sequence is ATP synthase subunit delta (181 aa).

This sequence belongs to the ATPase delta chain family. In terms of assembly, F-type ATPases have 2 components, F(1) - the catalytic core - and F(0) - the membrane proton channel. F(1) has five subunits: alpha(3), beta(3), gamma(1), delta(1), epsilon(1). F(0) has three main subunits: a(1), b(2) and c(10-14). The alpha and beta chains form an alternating ring which encloses part of the gamma chain. F(1) is attached to F(0) by a central stalk formed by the gamma and epsilon chains, while a peripheral stalk is formed by the delta and b chains.

Its subcellular location is the cell inner membrane. In terms of biological role, f(1)F(0) ATP synthase produces ATP from ADP in the presence of a proton or sodium gradient. F-type ATPases consist of two structural domains, F(1) containing the extramembraneous catalytic core and F(0) containing the membrane proton channel, linked together by a central stalk and a peripheral stalk. During catalysis, ATP synthesis in the catalytic domain of F(1) is coupled via a rotary mechanism of the central stalk subunits to proton translocation. Its function is as follows. This protein is part of the stalk that links CF(0) to CF(1). It either transmits conformational changes from CF(0) to CF(1) or is implicated in proton conduction. This Fervidobacterium nodosum (strain ATCC 35602 / DSM 5306 / Rt17-B1) protein is ATP synthase subunit delta.